The following is a 416-amino-acid chain: Gamma-glutamyl phosphate reductase (416 aa).

The protein belongs to the gamma-glutamyl phosphate reductase family.

The protein localises to the cytoplasm. It catalyses the reaction L-glutamate 5-semialdehyde + phosphate + NADP(+) = L-glutamyl 5-phosphate + NADPH + H(+). The protein operates within amino-acid biosynthesis; L-proline biosynthesis; L-glutamate 5-semialdehyde from L-glutamate: step 2/2. Its function is as follows. Catalyzes the NADPH-dependent reduction of L-glutamate 5-phosphate into L-glutamate 5-semialdehyde and phosphate. The product spontaneously undergoes cyclization to form 1-pyrroline-5-carboxylate. The polypeptide is Gamma-glutamyl phosphate reductase (Salmonella schwarzengrund (strain CVM19633)).